We begin with the raw amino-acid sequence, 181 residues long: Trafficking protein particle complex subunit 3 homolog (181 aa).

Residue C70 is the site of S-palmitoyl cysteine attachment.

Belongs to the TRAPP small subunits family. BET3 subfamily. Homodimer. Part of the multisubunit TRAPP (transport protein particle) complex.

Its subcellular location is the golgi apparatus. The protein localises to the cis-Golgi network. It localises to the endoplasmic reticulum. In terms of biological role, may play a role in vesicular transport from endoplasmic reticulum to Golgi. Required for the systemic spread of the RNAi response. The chain is Trafficking protein particle complex subunit 3 homolog (trpp-3) from Caenorhabditis elegans.